Consider the following 130-residue polypeptide: Nascent polypeptide-associated complex protein (130 aa).

Residues 6 to 74 (GMNPRKMQQM…PVERDAADAI (69 aa)) enclose the NAC-A/B domain. Positions 65–91 (PVERDAADAIEAAPADDSDDTDDDDAI) are disordered. Over residues 78 to 90 (PADDSDDTDDDDA) the composition is skewed to acidic residues.

It belongs to the NAC-alpha family. As to quaternary structure, homodimer. Interacts with the ribosome. Binds ribosomal RNA.

Its function is as follows. Contacts the emerging nascent chain on the ribosome. In Halobacterium salinarum (strain ATCC 700922 / JCM 11081 / NRC-1) (Halobacterium halobium), this protein is Nascent polypeptide-associated complex protein.